A 493-amino-acid chain; its full sequence is Keratin, type II cuticular Hb3 (493 aa).

The head stretch occupies residues 1-111 (MTCGFSTVGS…PNAQCVKQEE (111 aa)). Residues 111–422 (EKEQIKCLNN…RLLEGEEQRL (312 aa)) enclose the IF rod domain. The tract at residues 112–146 (KEQIKCLNNRFAAFIDKVRFLEQQNKLLETKLQFY) is coil 1A. Positions 147 to 156 (QNRQCCESNL) are linker 1. Residues 157–257 (EPLFEGYIET…YEEEIRVLQA (101 aa)) are coil 1B. Residue lysine 217 forms a Glycyl lysine isopeptide (Lys-Gly) (interchain with G-Cter in SUMO1) linkage. Positions 258 to 274 (NISDTSVIVKMDNSRGL) are linker 12. Residues 275 to 418 (NMDNIVAEIK…ATYRRLLEGE (144 aa)) form a coil 2 region. Positions 419–493 (EQRLCEGVGA…GGGSCSLGRC (75 aa)) are tail.

This sequence belongs to the intermediate filament family. Heterotetramer of two type I and two type II keratins.

This Bos taurus (Bovine) protein is Keratin, type II cuticular Hb3.